The following is a 248-amino-acid chain: tRNA1(Val) (adenine(37)-N6)-methyltransferase (248 aa).

Belongs to the methyltransferase superfamily. tRNA (adenine-N(6)-)-methyltransferase family.

Its subcellular location is the cytoplasm. The catalysed reaction is adenosine(37) in tRNA1(Val) + S-adenosyl-L-methionine = N(6)-methyladenosine(37) in tRNA1(Val) + S-adenosyl-L-homocysteine + H(+). Functionally, specifically methylates the adenine in position 37 of tRNA(1)(Val) (anticodon cmo5UAC). This chain is tRNA1(Val) (adenine(37)-N6)-methyltransferase, found in Pectobacterium carotovorum subsp. carotovorum (strain PC1).